Here is a 647-residue protein sequence, read N- to C-terminus: Spindle pole body-associated protein VIK1 (647 aa).

Positions 36 to 51 are enriched in polar residues; it reads NTTNTMNGSRPSSMKS. Residues 36–55 are disordered; sequence NTTNTMNGSRPSSMKSSLAL. Positions 202–350 form a coiled coil; that stretch reads DHEITEEISQ…SKQEKFYNDT (149 aa).

As to quaternary structure, interacts with KAR3; the interaction is direct.

It localises to the cytoplasm. Its subcellular location is the cytoskeleton. The protein resides in the microtubule organizing center. It is found in the spindle pole body. The protein localises to the nucleus. In terms of biological role, together with the minus end-directed microtubule motor KAR3, plays a role in microtubule organization. Recruits KAR3 to microtubules, and together they may stabilize the polymers. The KAR3-VIK1 heterodimer cross-links anti-parallel microtubules. Targets and/or maintains KAR3 at the spindle pole body during vegetative growth. This Saccharomyces cerevisiae (strain ATCC 204508 / S288c) (Baker's yeast) protein is Spindle pole body-associated protein VIK1 (VIK1).